Reading from the N-terminus, the 1256-residue chain is SNF2 domain-containing protein CLASSY 1 (1256 aa).

Disordered stretches follow at residues 269–290 and 448–467; these read ELRR…EIQP and GNVV…VSRE. The span at 278–290 shows a compositional bias: basic and acidic residues; it reads GRPERYGDSEIQP. Residues 451–463 show a composition bias toward basic residues; sequence VHKRNGPHSRIRS. Residues 699–898 enclose the Helicase ATP-binding domain; it reads DPSSDKIGGC…FNTLCLARPK (200 aa). ATP is bound at residue 712–719; the sequence is HTPGAGKT. The DEAH box signature appears at 849–852; sequence DEGH. One can recognise a Helicase C-terminal domain in the interval 1061–1222; sequence FVLNLVFRVV…EFVEDPSQWQ (162 aa).

The protein belongs to the helicase family. In terms of assembly, interacts with NRPD1, NRPD3 and SHH1.

Its subcellular location is the nucleus. It localises to the nucleoplasm. The protein localises to the nucleolus. Probable chromatin remodeling factor. Required for the initial establishment of DNA methylation and for accumulation of 24-nt siRNAs. May act on RNA templates by remodeling ribonucleoprotein structures and thereby influencing the availability of the RNA to polymerases. The chain is SNF2 domain-containing protein CLASSY 1 (CLSY1) from Arabidopsis thaliana (Mouse-ear cress).